The sequence spans 231 residues: Aquaporin Z (231 aa).

2 helical membrane passes run 9–29 (CFGT…AAGF) and 34–54 (IGFA…AFAV). Positions 63-65 (NPA) match the NPA 1 motif. The next 3 membrane-spanning stretches (helical) occupy residues 82–102 (VGYV…LYLI), 129–149 (YSML…LLVI), and 156–176 (FAPA…IHLI). The NPA 2 signature appears at 186-188 (NPA). A helical transmembrane segment spans residues 202 to 222 (LEQLWFFWVVPIVGGIIGGLI).

The protein belongs to the MIP/aquaporin (TC 1.A.8) family. In terms of assembly, homotetramer.

It is found in the cell inner membrane. The catalysed reaction is H2O(in) = H2O(out). Its function is as follows. Channel that permits osmotically driven movement of water in both directions. It is involved in the osmoregulation and in the maintenance of cell turgor during volume expansion in rapidly growing cells. It mediates rapid entry or exit of water in response to abrupt changes in osmolarity. The sequence is that of Aquaporin Z from Escherichia coli O157:H7.